The sequence spans 241 residues: Putative hydrolase 080R (241 aa).

Residues 50–241 form the Nudix hydrolase domain; sequence FPDLSFNLMV…VIKVQKIMIL (192 aa). The Nudix box motif lies at 136–157; that stretch reads GHCNGNEPVLSTLLREFREETT. 3 residues coordinate Mg(2+): glutamate 151, glutamate 155, and aspartate 204.

Belongs to the Nudix hydrolase family.

The sequence is that of Putative hydrolase 080R from Aedes vexans (Inland floodwater mosquito).